We begin with the raw amino-acid sequence, 595 residues long: Leiomodin-1 (595 aa).

Disordered regions lie at residues 1–322 and 467–568; these read MSKV…KVKN and DKQR…QEKN. A Phosphoserine modification is found at Ser12. The span at 27–40 shows a compositional bias: acidic residues; that stretch reads EEMEELEKELDVVD. Composition is skewed to basic and acidic residues over residues 72–105, 117–127, 134–193, 201–224, 232–251, 259–289, 467–476, and 484–493; these read CEKESKKIIQREMSVDESKQVGRKTDAKNGEDKG, QDSDVGKEPKK, FSRD…EKTG, SRDKDKKREEVKEPSKKEEVKLTA, RQEDGKQKESREDRDKKPEV, RDSRKEDEKVKKEETQPDKGVREEGKTREKQ, DKQRQKRLQE, and SGEKKDRLEV. Ser85 is modified (phosphoserine). Residue Ser135 is modified to Phosphoserine. Tandem repeats lie at residues 165 to 180, 181 to 196, 197 to 212, 213 to 227, 228 to 243, 244 to 257, 258 to 273, and 274 to 288. An 8 X approximate tandem repeats region spans residues 165 to 288; the sequence is AAVDRKEAGK…VREEGKTREK (124 aa). Pro residues-rich tracts occupy residues 503–513 and 527–538; these read SPKPSPQPSPK and AAPPPPPPPLAP. The interval 503–522 is 5 X 4 AA approximate tandem repeats; that stretch reads SPKPSPQPSPKSAPKNSPKK. Phosphoserine is present on Ser550. The WH2 domain maps to 569–588; that stretch reads SRDQLLAAIRSSNLKQLKKV.

Detected in smooth muscle, in stomach and uterus, blood vessel wall, and in slow fibers in extraocular muscle, urinary bladder and sternothyroid muscle (at protein level).

Its subcellular location is the cytoplasm. The protein resides in the myofibril. It localises to the sarcomere. The protein localises to the cytoskeleton. In terms of biological role, required for proper contractility of visceral smooth muscle cells. Mediates nucleation of actin filaments. The chain is Leiomodin-1 from Rattus norvegicus (Rat).